A 536-amino-acid polypeptide reads, in one-letter code: Signal peptide peptidase-like 5 (536 aa).

The N-terminal stretch at 1 to 29 is a signal peptide; that stretch reads MSLPPFTCRLLAAAAALYLIGLLCVGADT. Over 30-186 the chain is Lumenal; sequence KDVTAPKIPG…VELLLYAPKS (157 aa). The 77-residue stretch at 94–170 folds into the PA domain; it reads SNLTSKLSWS…TSSGDALKKS (77 aa). Residues asparagine 95 and asparagine 151 are each glycosylated (N-linked (GlcNAc...) asparagine). Residues 187–207 form a helical membrane-spanning segment; it reads PIVDYAVVFLWLMSVGTVFVA. Residues 208–243 are Cytoplasmic-facing; it reads SVWSHVTSPKKNDEQYDELSPKKSSNVDATKGGAEE. The tract at residues 218-238 is disordered; it reads KNDEQYDELSPKKSSNVDATK. A helical transmembrane segment spans residues 244-264; that stretch reads ETLDISAMGAVIFVISASTFL. At 265 to 273 the chain is on the lumenal side; sequence VLLFFFMSS. Residues 274–296 form a helical membrane-spanning segment; sequence WFILILTIFFVIGGMQGMHNINV. Residues 297–318 lie on the Cytoplasmic side of the membrane; the sequence is TLITRRCSKCGQKNLKLPLLGN. The chain crosses the membrane as a helical span at residues 319-339; it reads TSILSLVVLLFCFVVAILWFM. At 340–344 the chain is on the lumenal side; it reads NRKTS. The chain crosses the membrane as a helical span at residues 345 to 365; that stretch reads HAWAGQDIFGICMMINVLQVA. Residues 366-374 are Cytoplasmic-facing; that stretch reads RLPNIRVAT. A helical transmembrane segment spans residues 375–395; the sequence is ILLCCAFFYDIFWVFISPLIF. Aspartate 384 is a catalytic residue. Residues 396 to 428 are Lumenal-facing; that stretch reads KQSVMIAVARGSKDTGESIPMLLRIPRLSDPWG. Residues 429-449 form a helical membrane-spanning segment; sequence GYNMIGFGDILFPGLLICFIF. Aspartate 437 is an active-site residue. The Cytoplasmic portion of the chain corresponds to 450-463; the sequence is RFDKENNKGVSNGY. The helical transmembrane segment at 464-484 threads the bilayer; that stretch reads FPWLMFGYGLGLFLTYLGLYV. Residues 485–489 are Lumenal-facing; that stretch reads MNGHG. Residues 490 to 510 traverse the membrane as a helical segment; sequence QPALLYLVPCTLGITVILGLV. A PAL motif is present at residues 491 to 493; sequence PAL. The Cytoplasmic portion of the chain corresponds to 511-536; the sequence is RKELRDLWNYGTQQPSAADVNPSPEA.

It belongs to the peptidase A22B family. Glycosylated.

It is found in the endosome membrane. Intramembrane-cleaving aspartic protease (I-CLiP) that cleaves type II membrane signal peptides in the hydrophobic plane of the membrane. The sequence is that of Signal peptide peptidase-like 5 (SPPL5) from Arabidopsis thaliana (Mouse-ear cress).